A 163-amino-acid polypeptide reads, in one-letter code: Nucleotide-binding protein cbdbA1256 (163 aa).

It belongs to the YajQ family.

Functionally, nucleotide-binding protein. This chain is Nucleotide-binding protein cbdbA1256, found in Dehalococcoides mccartyi (strain CBDB1).